Here is a 386-residue protein sequence, read N- to C-terminus: S-adenosylmethionine synthase (386 aa).

An ATP-binding site is contributed by His-16. Asp-18 is a Mg(2+) binding site. Residue Glu-44 participates in K(+) binding. 2 residues coordinate L-methionine: Glu-57 and Gln-100. Positions Gln-100–Arg-110 are flexible loop. ATP is bound by residues Asp-165–Lys-167, Asp-240, Arg-246–Lys-247, Ala-263, and Lys-267. Residue Asp-240 coordinates L-methionine. Lys-271 serves as a coordination point for L-methionine.

The protein belongs to the AdoMet synthase family. As to quaternary structure, homotetramer; dimer of dimers. The cofactor is Mg(2+). K(+) is required as a cofactor.

The protein resides in the cytoplasm. The enzyme catalyses L-methionine + ATP + H2O = S-adenosyl-L-methionine + phosphate + diphosphate. Its pathway is amino-acid biosynthesis; S-adenosyl-L-methionine biosynthesis; S-adenosyl-L-methionine from L-methionine: step 1/1. In terms of biological role, catalyzes the formation of S-adenosylmethionine (AdoMet) from methionine and ATP. The overall synthetic reaction is composed of two sequential steps, AdoMet formation and the subsequent tripolyphosphate hydrolysis which occurs prior to release of AdoMet from the enzyme. This chain is S-adenosylmethionine synthase, found in Francisella philomiragia subsp. philomiragia (strain ATCC 25017 / CCUG 19701 / FSC 153 / O#319-036).